The primary structure comprises 639 residues: Putative cyclic beta-1,2-glucan modification protein (639 aa).

6 consecutive transmembrane segments (helical) span residues 34–54, 69–89, 96–116, 144–164, 185–205, and 227–247; these read ALFT…IVRW, PAWT…ALFG, LLIA…QVFL, WTAV…ALLL, FALP…FSWI, and FALA…AGYM.

Its subcellular location is the cell membrane. This is Putative cyclic beta-1,2-glucan modification protein (cgmA) from Rhizobium meliloti (strain 1021) (Ensifer meliloti).